Reading from the N-terminus, the 428-residue chain is MQWTKSEQLYKEALQHIVGGVNSPSRSYKAVGGGAPVVMERAQGAYFWDVDGNKYIDYLAAYGPIIAGHAHPHIAEAIRRAAETGVLYGTPTPHEITFAKMLKEAIPSLEKVRFVNSGTEAVMTTIRVARAYTGRSKIVKFEGCYHGHSDLVLVAAGSGPSTLGTPDSAGVPPSIAQEVITVPYNDVESFREAMNVWGEQVAAVLVEPIVGNFGIVLPKPGFLEAINEIAHKEGALVIYDEVITAFRFMYGGAQNLLGVEPDLTAMGKIIGGGLPIGAYGGRQDIMEQVAPLGPAYQAGTMAGNPASVLAGIACLEVLKQEGVYEHLDRLGAMLEEGILAHARQCGLPVTVNRLKGALTVFFTDEKVENYKQAQRSDGELFAKFFKLMLKQGINLAPSKYEAWFITLAHTEDDIAYTIDAVGKAFRQL.

Position 268 is an N6-(pyridoxal phosphate)lysine (lysine 268).

It belongs to the class-III pyridoxal-phosphate-dependent aminotransferase family. HemL subfamily. As to quaternary structure, homodimer. Pyridoxal 5'-phosphate serves as cofactor.

The protein localises to the cytoplasm. The catalysed reaction is (S)-4-amino-5-oxopentanoate = 5-aminolevulinate. Its pathway is porphyrin-containing compound metabolism; protoporphyrin-IX biosynthesis; 5-aminolevulinate from L-glutamyl-tRNA(Glu): step 2/2. The chain is Glutamate-1-semialdehyde 2,1-aminomutase 1 from Geobacillus kaustophilus (strain HTA426).